A 339-amino-acid chain; its full sequence is Anthranilate phosphoribosyltransferase (339 aa).

Residues Gly-79, 82-83, Ser-87, 89-92, 107-115, and Ser-119 each bind 5-phospho-alpha-D-ribose 1-diphosphate; these read GD, NIST, and KHGNRSISS. Gly-79 is an anthranilate binding site. Position 91 (Ser-91) interacts with Mg(2+). Asn-110 serves as a coordination point for anthranilate. Arg-165 serves as a coordination point for anthranilate. Mg(2+) is bound by residues Asp-224 and Glu-225.

This sequence belongs to the anthranilate phosphoribosyltransferase family. Homodimer. It depends on Mg(2+) as a cofactor.

The enzyme catalyses N-(5-phospho-beta-D-ribosyl)anthranilate + diphosphate = 5-phospho-alpha-D-ribose 1-diphosphate + anthranilate. Its pathway is amino-acid biosynthesis; L-tryptophan biosynthesis; L-tryptophan from chorismate: step 2/5. Functionally, catalyzes the transfer of the phosphoribosyl group of 5-phosphorylribose-1-pyrophosphate (PRPP) to anthranilate to yield N-(5'-phosphoribosyl)-anthranilate (PRA). In Listeria innocua serovar 6a (strain ATCC BAA-680 / CLIP 11262), this protein is Anthranilate phosphoribosyltransferase.